The primary structure comprises 594 residues: E3 ubiquitin-protein ligase TRAF7 (594 aa).

A disordered region spans residues 1 to 33 (MPPINTPRRSDSAISVRSLHSESSMSLRSTFSL). Phosphoserine occurs at positions 12 and 15. Low complexity predominate over residues 15–29 (SVRSLHSESSMSLRS). The RING-type zinc finger occupies 55–89 (CQLCCSVFKDPVITTCGHTFCRRCALKSEKCPVDN). The TRAF-type zinc-finger motif lies at 146–216 (HESSCDYRPV…RFEGLKEFLQ (71 aa)). 7 WD repeats span residues 318–357 (GHQG…KCQK), 361–398 (GHDG…KVNT), 401–437 (AHDN…LKLK), 439–478 (ELTG…CIHV), 481–518 (TSGG…QVRT), 521–562 (GHVG…CTQT), and 565–593 (RHQG…KVWT).

This sequence belongs to the WD repeat TRAF7 family. Homodimer. Interacts with MAP3K3 and promotes the kinase activity of this enzyme. Post-translationally, phosphorylated by MAP3K3. Ubiquitinates itself upon phosphorylation. As to expression, ubiquitously expressed. Expression is relatively high in heart, liver, kidney, testis, prostate, thyroid, and salivary gland.

The protein resides in the cytoplasmic vesicle. It is found in the cytoplasm. It localises to the nucleus. The enzyme catalyses S-ubiquitinyl-[E2 ubiquitin-conjugating enzyme]-L-cysteine + [acceptor protein]-L-lysine = [E2 ubiquitin-conjugating enzyme]-L-cysteine + N(6)-ubiquitinyl-[acceptor protein]-L-lysine.. The protein operates within protein modification; protein ubiquitination. In terms of biological role, E3 ubiquitin and SUMO-protein ligase that plays a role in different biological processes such as innate immunity, inflammation or apoptosis. Potentiates MAP3K3-mediated activation of the NF-kappa-B, JUN/AP1 and DDIT3 transcriptional regulators. Negatively regulates MYB transcriptional activity by sequestering it to the cytosol via SUMOylation. Plays a role in the phosphorylation of MAPK1 and/or MAPK3, probably via its interaction with MAP3K3. Negatively regulates RLR-mediated innate immunity by promoting 'Lys-48'-linked ubiquitination of TBK1 through its RING domain to inhibit the cellular antiviral response. Promotes 'Lys-29'-linked polyubiquitination of NEMO/IKBKG and RELA leading to targeting these two proteins to lysosomal degradative pathways, reducing the transcriptional activity of NF-kappa-B. In Mus musculus (Mouse), this protein is E3 ubiquitin-protein ligase TRAF7.